Consider the following 873-residue polypeptide: Nonsense-mediated mRNA decay factor SMG8 (873 aa).

The interval 531–604 is disordered; the sequence is AKKMAQREDE…ESMASKTERE (74 aa). The segment covering 540–550 has biased composition (acidic residues); that stretch reads ELAEEDTDLDI. Composition is skewed to low complexity over residues 551-562 and 574-583; these read PESLLDPDSTSP and SSSESSSQES. A compositionally biased stretch (basic and acidic residues) spans 591–604; it reads SRRDESMASKTERE.

It belongs to the SMG8 family.

Functionally, involved in nonsense-mediated decay (NMD) of mRNAs containing premature stop codons. Probable component of kinase complex containing smg-1 and recruited to stalled ribosomes. This is Nonsense-mediated mRNA decay factor SMG8 (smg-8) from Caenorhabditis elegans.